The primary structure comprises 130 residues: Small ribosomal subunit protein uS8 (130 aa).

The protein belongs to the universal ribosomal protein uS8 family. Part of the 30S ribosomal subunit. Contacts proteins S5 and S12.

Functionally, one of the primary rRNA binding proteins, it binds directly to 16S rRNA central domain where it helps coordinate assembly of the platform of the 30S subunit. In Salmonella arizonae (strain ATCC BAA-731 / CDC346-86 / RSK2980), this protein is Small ribosomal subunit protein uS8.